A 360-amino-acid polypeptide reads, in one-letter code: Peptide chain release factor 1 (360 aa).

The residue at position 235 (glutamine 235) is an N5-methylglutamine. Positions 284 to 293 (QKRQQEEAST) are enriched in basic and acidic residues. The disordered stretch occupies residues 284 to 305 (QKRQQEEASTRRNLLGSGDRSD).

The protein belongs to the prokaryotic/mitochondrial release factor family. Post-translationally, methylated by PrmC. Methylation increases the termination efficiency of RF1.

It is found in the cytoplasm. Peptide chain release factor 1 directs the termination of translation in response to the peptide chain termination codons UAG and UAA. The chain is Peptide chain release factor 1 from Pectobacterium carotovorum subsp. carotovorum (strain PC1).